A 157-amino-acid chain; its full sequence is Myosin essential light chain, striated adductor muscle (157 aa).

2 consecutive EF-hand domains span residues 7 to 44 (DEIDDLKDVFELFDFWDGRDGAVDAFKLGDVCRCLGIN) and 82 to 117 (GTFADYMEAFKTFDREGQGFISGAELRHVLTALGER).

Its function is as follows. In molluscan muscle, calcium regulation is associated with myosin rather than with actin. Muscle myosin contains two types of light chains: the catalytic light chain, essential for ATPase activity, and the regulatory light chain, a calcium-binding protein responsible for Ca(2+) dependent binding and Ca(2+) dependent Mg-ATPase activity. This Argopecten irradians (Bay scallop) protein is Myosin essential light chain, striated adductor muscle.